The primary structure comprises 474 residues: Tumor necrosis factor receptor superfamily member 1B (474 aa).

The signal sequence occupies residues 1 to 22; sequence MAPAALWVALVVELQLWATGHT. Topologically, residues 23–258 are extracellular; sequence VPAKVVLTPY…PIIEPSITGG (236 aa). Threonine 30 is a glycosylation site (O-linked (GalNAc...) threonine). TNFR-Cys repeat units lie at residues 39–77, 78–119, 120–164, and 165–203; these read QCQISQEYYDKKAQMCCAKCPPGQYAKHFCNKTSDTVCA, DCAA…NRVC, ACNA…VICS, and ACAPGTFSDTTSSTDVCRPHRICSILAIPGNASTDAVCA. 10 disulfides stabilise this stretch: cysteine 40-cysteine 54, cysteine 55-cysteine 68, cysteine 58-cysteine 76, cysteine 79-cysteine 94, cysteine 97-cysteine 111, cysteine 101-cysteine 119, cysteine 121-cysteine 127, cysteine 136-cysteine 145, cysteine 139-cysteine 163, and cysteine 166-cysteine 181. N-linked (GlcNAc...) asparagine glycosylation is present at asparagine 69. The N-linked (GlcNAc...) asparagine glycan is linked to asparagine 110. Residue asparagine 195 is glycosylated (N-linked (GlcNAc...) asparagine). Residues threonine 208 and threonine 224 are each glycosylated (O-linked (GalNAc...) threonine). Residues 220-239 show a composition bias toward polar residues; the sequence is QPEPTRSQPMDQEPGPSQTP. A disordered region spans residues 220-241; sequence QPEPTRSQPMDQEPGPSQTPHI. A helical membrane pass occupies residues 259–288; it reads ISLPIGLIVGLTTLGLLMLGLANCFILVQR. Residues 289 to 474 lie on the Cytoplasmic side of the membrane; it reads KKKPSCLQRE…WYDQIAVKVP (186 aa). Disordered regions lie at residues 321 to 378 and 397 to 464; these read LTTA…GSHG and SQCS…NQPG. 2 stretches are compositionally biased toward low complexity: residues 324–338 and 366–378; these read APSSSSSSLESSASA and GSRSSDSSHGSHG. Serine 331 is subject to Phosphoserine. Polar residues predominate over residues 429–442; the sequence is ECPSQSQWETTETL.

As to quaternary structure, binds to TRAF2. Interacts with BMX. Interacts (activated form) with XPNPEP3.

It localises to the membrane. In terms of biological role, receptor with high affinity for TNFSF2/TNF-alpha and approximately 5-fold lower affinity for homotrimeric TNFSF1/lymphotoxin-alpha. The TRAF1/TRAF2 complex recruits the apoptotic suppressors BIRC2 and BIRC3 to TNFRSF1B/TNFR2. The sequence is that of Tumor necrosis factor receptor superfamily member 1B (Tnfrsf1b) from Rattus norvegicus (Rat).